We begin with the raw amino-acid sequence, 74 residues long: MKHIFILLIRFYQRFISPLKPPTCRFYPTCSHYGLEAIRRFGALKGGYLTIKRILKCHPFHPGGFDPVPEKEQK.

Belongs to the UPF0161 family.

Its subcellular location is the cell membrane. Functionally, could be involved in insertion of integral membrane proteins into the membrane. This is Putative membrane protein insertion efficiency factor from Anoxybacillus flavithermus (strain DSM 21510 / WK1).